A 622-amino-acid polypeptide reads, in one-letter code: Low affinity potassium transport system protein Kup (622 aa).

Helical transmembrane passes span 9–29 (LPAITLAAIGVVYGDIGTSPL), 49–69 (VFGFLSLIFWLLIFVVSIKYL), 103–123 (VIMGLIGGSFFYGEVVITPAI), 137–157 (PQLDTWIVPLSIIVLTLLFMI), 165–185 (VGKLFAPIMLTWFLILAGLGL), 213–233 (VSFIALGAVVLSITGGEVLYA), 247–267 (WFTVVLPSLTLNYFGQGALLL), 276–296 (PFFLLAPDWALIPLLIIAALA), 337–357 (IYIPFVNWMLYVAVVIVIVSF), 363–383 (LAAAYGIAVTGTMVLTSILST), 396–416 (FVALILIAFLCVDIPLFTANL), and 419–439 (LLSGGWLPLSLGTVMFIVMTT).

It belongs to the HAK/KUP transporter (TC 2.A.72) family.

Its subcellular location is the cell inner membrane. The catalysed reaction is K(+)(in) + H(+)(in) = K(+)(out) + H(+)(out). Functionally, responsible for the low-affinity transport of potassium into the cell. Likely operates as a K(+):H(+) symporter. This chain is Low affinity potassium transport system protein Kup, found in Shigella flexneri.